A 302-amino-acid chain; its full sequence is Methionyl-tRNA formyltransferase (302 aa).

107-110 (SLLP) contacts (6S)-5,6,7,8-tetrahydrofolate.

The protein belongs to the Fmt family.

It carries out the reaction L-methionyl-tRNA(fMet) + (6R)-10-formyltetrahydrofolate = N-formyl-L-methionyl-tRNA(fMet) + (6S)-5,6,7,8-tetrahydrofolate + H(+). In terms of biological role, attaches a formyl group to the free amino group of methionyl-tRNA(fMet). The formyl group appears to play a dual role in the initiator identity of N-formylmethionyl-tRNA by promoting its recognition by IF2 and preventing the misappropriation of this tRNA by the elongation apparatus. This Leifsonia xyli subsp. xyli (strain CTCB07) protein is Methionyl-tRNA formyltransferase.